The sequence spans 554 residues: Undecaprenyl phosphate-alpha-4-amino-4-deoxy-L-arabinose arabinosyl transferase (554 aa).

11 consecutive transmembrane segments (helical) span residues 4 to 24 (LKDSGAALLALFFVLVYLLPV), 87 to 107 (FGSIFSTALSAVLVYWLATLL), 115 to 135 (VLATLIYLSFLLVFGIGTYAV), 178 to 198 (FMTKGFLALAVPVIAVLPIVI), 206 to 226 (LVVFGPIAIVCAVLLSLPWAL), 262 to 282 (YLPILCIGVLPWLGLLPGALF), 293 to 313 (ELFFLLSWVVMPLLFFSVAKG), 315 to 335 (LPTYILPCMAPLSLLMAAYAT), 351 to 371 (VINLLFGVACALVIVVIGLGL), 384 to 404 (QKVWLGVLAFAGWGVTGFITL), and 414 to 434 (AAACPLLFILLVGYLIPQQVV).

This sequence belongs to the glycosyltransferase 83 family.

The protein localises to the cell inner membrane. It catalyses the reaction 4-amino-4-deoxy-alpha-L-arabinopyranosyl di-trans,octa-cis-undecaprenyl phosphate + lipid IVA = lipid IIA + di-trans,octa-cis-undecaprenyl phosphate.. It participates in lipopolysaccharide metabolism; 4-amino-4-deoxy-beta-L-arabinose-lipid A biosynthesis. Catalyzes the transfer of the L-Ara4N moiety of the glycolipid undecaprenyl phosphate-alpha-L-Ara4N to lipid A. The modified arabinose is attached to lipid A and is required for resistance to polymyxin and cationic antimicrobial peptides. The protein is Undecaprenyl phosphate-alpha-4-amino-4-deoxy-L-arabinose arabinosyl transferase of Yersinia pseudotuberculosis serotype O:3 (strain YPIII).